We begin with the raw amino-acid sequence, 344 residues long: Dihydroorotase (344 aa).

Zn(2+)-binding residues include His-13 and His-15. Substrate contacts are provided by residues 15–17 (HLR) and Asn-41. Positions 98, 135, and 173 each coordinate Zn(2+). N6-carboxylysine is present on Lys-98. Position 135 (His-135) interacts with substrate. Residue Leu-218 coordinates substrate. Position 247 (Asp-247) interacts with Zn(2+). The active site involves Asp-247. Residues His-251 and Ala-263 each coordinate substrate.

The protein belongs to the metallo-dependent hydrolases superfamily. DHOase family. Class II DHOase subfamily. As to quaternary structure, homodimer. Zn(2+) is required as a cofactor.

It carries out the reaction (S)-dihydroorotate + H2O = N-carbamoyl-L-aspartate + H(+). It functions in the pathway pyrimidine metabolism; UMP biosynthesis via de novo pathway; (S)-dihydroorotate from bicarbonate: step 3/3. In terms of biological role, catalyzes the reversible cyclization of carbamoyl aspartate to dihydroorotate. In Neisseria gonorrhoeae (strain ATCC 700825 / FA 1090), this protein is Dihydroorotase.